The chain runs to 626 residues: UvrABC system protein C (626 aa).

A GIY-YIG domain is found at 26-105 (PEPGVYFMRD…IKQHQPHFNV (80 aa)). Residues 215-250 (SELINTLSLQMEQAAEDLNFEQAARLRDQIKGLQGL) form the UVR domain.

This sequence belongs to the UvrC family. As to quaternary structure, interacts with UvrB in an incision complex.

Its subcellular location is the cytoplasm. Functionally, the UvrABC repair system catalyzes the recognition and processing of DNA lesions. UvrC both incises the 5' and 3' sides of the lesion. The N-terminal half is responsible for the 3' incision and the C-terminal half is responsible for the 5' incision. In Acaryochloris marina (strain MBIC 11017), this protein is UvrABC system protein C.